The primary structure comprises 479 residues: Acetylcholine receptor subunit alpha-type acr-15 (479 aa).

Positions 1-18 (MLLPILLHFLLLITQLNG) are cleaved as a signal peptide. Over 19-230 (SPAEVRLIND…HLRRRTLYYS (212 aa)) the chain is Extracellular. 2 N-linked (GlcNAc...) asparagine glycosylation sites follow: asparagine 60 and asparagine 92. Cysteine 146 and cysteine 160 form a disulfide bridge. The N-linked (GlcNAc...) asparagine glycan is linked to asparagine 200. Residues cysteine 208 and cysteine 209 are joined by a disulfide bond. The helical transmembrane segment at 231-251 (FNLIAPVLLTMILVILGFTVS) threads the bilayer. Topologically, residues 252–257 (PETCEK) are cytoplasmic. Residues 258–278 (VGLQISVSLAICIFLTIMSEL) traverse the membrane as a helical segment. At 279 to 285 (TPQTSEA) the chain is on the extracellular side. The chain crosses the membrane as a helical span at residues 286 to 306 (VPLLGVFFHTCNFISVLATSF). Over 307 to 453 (TVYVQSFHFR…WRFAAIVVDR (147 aa)) the chain is Cytoplasmic. The helical transmembrane segment at 454 to 474 (LCLLAFSLLIVVVSIIIALRA) threads the bilayer. Residues 475 to 479 (PYLFA) are Extracellular-facing.

This sequence belongs to the ligand-gated ion channel (TC 1.A.9) family. Acetylcholine receptor (TC 1.A.9.1) subfamily. In terms of tissue distribution, expressed in interneurons, motor neurons, pharyngeal neurons and muscles.

It is found in the cell membrane. The protein resides in the postsynaptic cell membrane. Functionally, after binding acetylcholine, the AChR responds by an extensive change in conformation that affects all subunits and leads to opening of an ion-conducting channel across the plasma membrane. Activity is required in glutamatergic neurons to mediate nicotine-induced and nicotine-motivated behaviors. The protein is Acetylcholine receptor subunit alpha-type acr-15 of Caenorhabditis elegans.